Reading from the N-terminus, the 335-residue chain is N-acetyl-gamma-glutamyl-phosphate reductase (335 aa).

Cys-155 is an active-site residue.

This sequence belongs to the NAGSA dehydrogenase family. Type 1 subfamily.

The protein localises to the cytoplasm. It carries out the reaction N-acetyl-L-glutamate 5-semialdehyde + phosphate + NADP(+) = N-acetyl-L-glutamyl 5-phosphate + NADPH + H(+). Its pathway is amino-acid biosynthesis; L-arginine biosynthesis; N(2)-acetyl-L-ornithine from L-glutamate: step 3/4. Functionally, catalyzes the NADPH-dependent reduction of N-acetyl-5-glutamyl phosphate to yield N-acetyl-L-glutamate 5-semialdehyde. The sequence is that of N-acetyl-gamma-glutamyl-phosphate reductase from Pasteurella multocida (strain Pm70).